A 526-amino-acid chain; its full sequence is Chaperonin GroEL 2 (526 aa).

ATP contacts are provided by K50, G413, and D494.

This sequence belongs to the chaperonin (HSP60) family. As to quaternary structure, forms a cylinder of 14 subunits composed of two heptameric rings stacked back-to-back. Interacts with the co-chaperonin GroES.

The protein resides in the cytoplasm. It catalyses the reaction ATP + H2O + a folded polypeptide = ADP + phosphate + an unfolded polypeptide.. Its function is as follows. Together with its co-chaperonin GroES, plays an essential role in assisting protein folding. The GroEL-GroES system forms a nano-cage that allows encapsulation of the non-native substrate proteins and provides a physical environment optimized to promote and accelerate protein folding. The sequence is that of Chaperonin GroEL 2 from Chlamydia pneumoniae (Chlamydophila pneumoniae).